A 344-amino-acid chain; its full sequence is Ferredoxin--NADP reductase (344 aa).

Ser12, Asp31, Lys39, Tyr43, Val83, Ile118, Asp285, and Ser326 together coordinate FAD.

It belongs to the ferredoxin--NADP reductase type 2 family. Homodimer. FAD serves as cofactor.

The catalysed reaction is 2 reduced [2Fe-2S]-[ferredoxin] + NADP(+) + H(+) = 2 oxidized [2Fe-2S]-[ferredoxin] + NADPH. The sequence is that of Ferredoxin--NADP reductase from Staphylococcus aureus (strain MW2).